A 92-amino-acid polypeptide reads, in one-letter code: Transcription factor PRE4 (92 aa).

In terms of domain architecture, bHLH spans 5-60; the sequence is KSRSRQTGASMITDEQINDLVLQLHRLLPELANNRRSGKVSASRVLQETCSYIRNL.

Belongs to the bHLH protein family. Interacts with HFR1 and IBH1. Expressed in roots, leaves, stems and flowers.

The protein localises to the nucleus. Functionally, atypical and probable non DNA-binding bHLH transcription factor that integrates multiple signaling pathways to regulate cell elongation and plant development. Regulates light responses by binding and inhibiting the activity of the bHLH transcription factor HFR1, a critical regulator of light signaling and shade avoidance. May have a regulatory role in various aspects of gibberellin-dependent growth and development. This is Transcription factor PRE4 (PRE4) from Arabidopsis thaliana (Mouse-ear cress).